A 250-amino-acid chain; its full sequence is NAD-dependent protein deacetylase (250 aa).

Positions 1–244 (MECDKVGDLL…PCVVDYIKSQ (244 aa)) constitute a Deacetylase sirtuin-type domain. The NAD(+) site is built by alanine 22, threonine 26, phenylalanine 33, arginine 34, glutamine 98, isoleucine 100, aspartate 101, and histidine 116. Phenylalanine 33 is a binding site for nicotinamide. Nicotinamide-binding residues include isoleucine 100 and aspartate 101. Histidine 116 functions as the Proton acceptor in the catalytic mechanism. 4 residues coordinate Zn(2+): cysteine 124, cysteine 127, cysteine 149, and cysteine 151. Residues serine 187, serine 188, asparagine 212, and valine 230 each contribute to the NAD(+) site.

The protein belongs to the sirtuin family. Class U subfamily. The cofactor is Zn(2+).

The protein resides in the cytoplasm. It carries out the reaction N(6)-acetyl-L-lysyl-[protein] + NAD(+) + H2O = 2''-O-acetyl-ADP-D-ribose + nicotinamide + L-lysyl-[protein]. Its function is as follows. NAD-dependent protein deacetylase which modulates the activities of several enzymes which are inactive in their acetylated form. Deacetylates the N-terminal lysine residue of Alba, the major archaeal chromatin protein and that, in turn, increases Alba's DNA binding affinity, thereby repressing transcription. The sequence is that of NAD-dependent protein deacetylase from Sulfurisphaera tokodaii (strain DSM 16993 / JCM 10545 / NBRC 100140 / 7) (Sulfolobus tokodaii).